A 126-amino-acid polypeptide reads, in one-letter code: Large ribosomal subunit protein uL14m (126 aa).

The protein belongs to the universal ribosomal protein uL14 family. In terms of assembly, component of the mitochondrial large ribosomal subunit (mt-LSU). Mature yeast 74S mitochondrial ribosomes consist of a small (37S) and a large (54S) subunit. The 37S small subunit contains a 15S ribosomal RNA (15S mt-rRNA) and at least 32 different proteins. The 54S large subunit contains a 21S rRNA (21S mt-rRNA) and at least 45 different proteins.

The protein localises to the mitochondrion. Its function is as follows. Component of the mitochondrial ribosome (mitoribosome), a dedicated translation machinery responsible for the synthesis of mitochondrial genome-encoded proteins, including at least some of the essential transmembrane subunits of the mitochondrial respiratory chain. The mitoribosomes are attached to the mitochondrial inner membrane and translation products are cotranslationally integrated into the membrane. This is Large ribosomal subunit protein uL14m (mrpl38) from Schizosaccharomyces pombe (strain 972 / ATCC 24843) (Fission yeast).